We begin with the raw amino-acid sequence, 421 residues long: MGMTIAEKILAAHAGKKEVTPGEIINAKVDIVLANDITAPIAIKEFEKLGVKDVFDRERIALVPDHFTPQKDIKAAEQCKMLREFAQKYKIKHYFEIGRVGIEHALLPEEGIVLPGDLVIGADSHTCTYGALGAFATGVGSTDAAIAMATGECWFKVPETIKFIYYGKLQKWVSGKDLILYTIGDIGVDGASYMAMEFIGEVIDNMPMSGRFSMCNMAIEAGAKAGIIVPDKITEEYVKLRAKRPYKIYNSDQDAKYFEIKEYDCSRIPPVVACPHLPSNVKPANELSHIKIDQVVIGSCTNGRLEDLREAAMVLKGRKVHPEVRMIIIPATQKIYMQALKEGLIEIFIDAQAVVSPPTCGPCLGGHMGILAKGERAIATTNRNFVGRMGHPESEVYLSNPAVAAASGVLGRIGTPEELGL.

3 residues coordinate [4Fe-4S] cluster: C300, C360, and C363.

It belongs to the aconitase/IPM isomerase family. LeuC type 2 subfamily. Heterodimer of LeuC and LeuD. The cofactor is [4Fe-4S] cluster.

It carries out the reaction (2R,3S)-3-isopropylmalate = (2S)-2-isopropylmalate. It functions in the pathway amino-acid biosynthesis; L-leucine biosynthesis; L-leucine from 3-methyl-2-oxobutanoate: step 2/4. Its function is as follows. Catalyzes the isomerization between 2-isopropylmalate and 3-isopropylmalate, via the formation of 2-isopropylmaleate. This Thermodesulfovibrio yellowstonii (strain ATCC 51303 / DSM 11347 / YP87) protein is 3-isopropylmalate dehydratase large subunit.